We begin with the raw amino-acid sequence, 136 residues long: Histone H3 (136 aa).

Residues methionine 1–arginine 43 are disordered. Residues lysine 5 and lysine 10 each carry the N6,N6,N6-trimethyllysine; alternate modification. An N6,N6-dimethyllysine; alternate modification is found at lysine 5. An N6-acetyllysine; alternate mark is found at lysine 5 and lysine 10. Residue lysine 5 is modified to N6-methyllysine; alternate. Serine 11 bears the Phosphoserine mark. N6-acetyllysine occurs at positions 15, 19, and 24. N6,N6,N6-trimethyllysine; alternate occurs at positions 28 and 37. N6,N6-dimethyllysine; alternate occurs at positions 28 and 37. Lysine 28, lysine 37, and lysine 57 each carry N6-acetyllysine; alternate. 3 positions are modified to N6-methyllysine; alternate: lysine 28, lysine 37, and lysine 57. Lysine 80 bears the N6-methyllysine mark.

The protein belongs to the histone H3 family. As to quaternary structure, the nucleosome is a histone octamer containing two molecules each of H2A, H2B, H3 and H4 assembled in one H3-H4 heterotetramer and two H2A-H2B heterodimers. The octamer wraps approximately 147 bp of DNA. Phosphorylated to form H3S10ph. H3S10ph promotes subsequent H3K14ac formation by GCN5. H3S10ph is only found in the mitotically dividing MIC, but not in the amitotically dividing MAC. H3S10ph is correlated with chromosome condensation during mitotic or meiotic micronuclear divisions. Post-translationally, acetylation of histone H3 leads to transcriptional activation. H3K14ac formation by GCN5 is promoted by H3S10ph. H3K9acK14ac is the preferred acetylated form of newly synthesized H3. Acetylation occurs almost exclusively in the MAC. In terms of processing, methylated to form H3K4me. H3K4me is only found in the transcriptionally active MAC. Methylated to form H3K9me in developing MACs during conjugation, when genome-wide DNA elimination occurs. At this stage, H3K9me specifically occurs on DNA sequences being eliminated (IES), probably targeted by small scan RNAs (scnRNAs) bound to IES, and is required for efficient IES elimination. H3K9me is required for the interaction with the chromodomains of PDD1 and PDD3. The full-length protein H3S (slow migrating) is converted to H3F (fast migrating) by proteolytic removal of the first 6 residues. H3F is unique to MIC, and processing seems to occur regularly each generation at a specific point in the cell cycle.

Its subcellular location is the nucleus. It is found in the chromosome. In terms of biological role, core component of nucleosome. Nucleosomes wrap and compact DNA into chromatin, limiting DNA accessibility to the cellular machineries which require DNA as a template. Histones thereby play a central role in transcription regulation, DNA repair, DNA replication and chromosomal stability. DNA accessibility is regulated via a complex set of post-translational modifications of histones, also called histone code, and nucleosome remodeling. This is Histone H3 from Tetrahymena pyriformis.